We begin with the raw amino-acid sequence, 235 residues long: Large ribosomal subunit protein uL1 (235 aa).

Belongs to the universal ribosomal protein uL1 family. As to quaternary structure, part of the 50S ribosomal subunit.

Functionally, binds directly to 23S rRNA. The L1 stalk is quite mobile in the ribosome, and is involved in E site tRNA release. Protein L1 is also a translational repressor protein, it controls the translation of the L11 operon by binding to its mRNA. The protein is Large ribosomal subunit protein uL1 of Methylibium petroleiphilum (strain ATCC BAA-1232 / LMG 22953 / PM1).